Here is a 146-residue protein sequence, read N- to C-terminus: Small ribosomal subunit protein uS13 (146 aa).

Residues 119–146 (ARGKKVRGQRTRSTGRKGRTVGVVRRKR) form a disordered region.

The protein belongs to the universal ribosomal protein uS13 family. In terms of assembly, part of the 30S ribosomal subunit. Forms a loose heterodimer with protein S19. Forms two bridges to the 50S subunit in the 70S ribosome.

Functionally, located at the top of the head of the 30S subunit, it contacts several helices of the 16S rRNA. In the 70S ribosome it contacts the 23S rRNA (bridge B1a) and protein L5 of the 50S subunit (bridge B1b), connecting the 2 subunits; these bridges are implicated in subunit movement. This Archaeoglobus fulgidus (strain ATCC 49558 / DSM 4304 / JCM 9628 / NBRC 100126 / VC-16) protein is Small ribosomal subunit protein uS13.